The chain runs to 211 residues: Large ribosomal subunit protein uL3 (211 aa).

Residues 116-142 form a disordered region; that stretch reads GTSGVMKKHGFSGNRASHGVSRNHRLG.

This sequence belongs to the universal ribosomal protein uL3 family. In terms of assembly, part of the 50S ribosomal subunit. Forms a cluster with proteins L14 and L19.

Functionally, one of the primary rRNA binding proteins, it binds directly near the 3'-end of the 23S rRNA, where it nucleates assembly of the 50S subunit. In Fusobacterium nucleatum subsp. nucleatum (strain ATCC 25586 / DSM 15643 / BCRC 10681 / CIP 101130 / JCM 8532 / KCTC 2640 / LMG 13131 / VPI 4355), this protein is Large ribosomal subunit protein uL3.